The chain runs to 694 residues: Elongation factor G (694 aa).

One can recognise a tr-type G domain in the interval 9 to 288 (DAIRNIGIMA…VIVKWLPSPL (280 aa)). GTP is bound by residues 18-25 (AHIDAGKT), 82-86 (DTPGH), and 136-139 (NKMD).

The protein belongs to the TRAFAC class translation factor GTPase superfamily. Classic translation factor GTPase family. EF-G/EF-2 subfamily.

It is found in the cytoplasm. Catalyzes the GTP-dependent ribosomal translocation step during translation elongation. During this step, the ribosome changes from the pre-translocational (PRE) to the post-translocational (POST) state as the newly formed A-site-bound peptidyl-tRNA and P-site-bound deacylated tRNA move to the P and E sites, respectively. Catalyzes the coordinated movement of the two tRNA molecules, the mRNA and conformational changes in the ribosome. The polypeptide is Elongation factor G (Chlamydia trachomatis serovar L2b (strain UCH-1/proctitis)).